The chain runs to 247 residues: uncharacterized protein (247 aa).

4 residues coordinate NAD(+): Leu19, Asp38, Asp63, and Val64. Ser142 lines the substrate pocket. 3 residues coordinate NAD(+): Tyr155, Lys159, and Ser190. The Proton acceptor role is filled by Tyr155.

Belongs to the short-chain dehydrogenases/reductases (SDR) family.

This is an uncharacterized protein from Mycobacterium bovis (strain ATCC BAA-935 / AF2122/97).